Consider the following 303-residue polypeptide: Ribonuclease HIII (303 aa).

The 218-residue stretch at 85–302 folds into the RNase H type-2 domain; it reads CSLIGSDEVG…TKKAYQLLKK (218 aa). 3 residues coordinate a divalent metal cation: aspartate 91, glutamate 92, and aspartate 196.

This sequence belongs to the RNase HII family. RnhC subfamily. Requires Mn(2+) as cofactor. It depends on Mg(2+) as a cofactor.

The protein localises to the cytoplasm. It catalyses the reaction Endonucleolytic cleavage to 5'-phosphomonoester.. Its function is as follows. Endonuclease that specifically degrades the RNA of RNA-DNA hybrids. This chain is Ribonuclease HIII, found in Streptococcus mutans serotype c (strain ATCC 700610 / UA159).